A 192-amino-acid polypeptide reads, in one-letter code: Thymidine kinase (192 aa).

ATP is bound by residues 9–16 (SAMNAGKS) and 87–90 (DECQ). Glutamate 88 acts as the Proton acceptor in catalysis. Residues cysteine 145, cysteine 147, cysteine 182, and histidine 185 each coordinate Zn(2+).

Belongs to the thymidine kinase family. In terms of assembly, homotetramer.

It localises to the cytoplasm. The catalysed reaction is thymidine + ATP = dTMP + ADP + H(+). This is Thymidine kinase from Shewanella oneidensis (strain ATCC 700550 / JCM 31522 / CIP 106686 / LMG 19005 / NCIMB 14063 / MR-1).